Reading from the N-terminus, the 259-residue chain is MASQGPLVIAMRLRNQLQSVYKMDPLRNEEVVKVKIKELNEHIVCYLCAGYFIDATTITECLHTFCKSCIVKYLQTSKYCPLCNIKIHETQPLLNLKLDRVMQDIVYKLVPGLQENEDGRIRDFYHSRGLERVLQPSAVEDSVGDVSQLSLSLAVSQKTSHYYRNDEHVCLCLEKVSSGKDKKKFILEQKYVRCSVRSEIRHLRRVLSHRLSAPLAHVQLLIDNKVLPDHMTMKQLWLTHWYGKPAPLVLLYSVREKRR.

The RING-type zinc finger occupies 45-84 (CYLCAGYFIDATTITECLHTFCKSCIVKYLQTSKYCPLCN).

In terms of assembly, component of a PRC1-like complex.

It is found in the nucleus. Component of a Polycomb group (PcG) multiprotein PRC1-like complex, a complex class required to maintain the transcriptionally repressive state of many genes, including Hox genes, throughout development. PcG PRC1 complex acts via chromatin remodeling and modification of histones; it mediates monoubiquitination of histone H2A 'Lys-119', rendering chromatin heritably changed in its expressibility. This chain is Polycomb group RING finger protein 1 (pcgf1), found in Xenopus tropicalis (Western clawed frog).